The primary structure comprises 239 residues: 7-cyano-7-deazaguanine synthase (239 aa).

13-23 (LSGGLDSMVTA) lines the ATP pocket. Zn(2+)-binding residues include Cys-193, Cys-203, Cys-206, and Cys-209.

It belongs to the QueC family. Requires Zn(2+) as cofactor.

The enzyme catalyses 7-carboxy-7-deazaguanine + NH4(+) + ATP = 7-cyano-7-deazaguanine + ADP + phosphate + H2O + H(+). Its pathway is purine metabolism; 7-cyano-7-deazaguanine biosynthesis. Catalyzes the ATP-dependent conversion of 7-carboxy-7-deazaguanine (CDG) to 7-cyano-7-deazaguanine (preQ(0)). The sequence is that of 7-cyano-7-deazaguanine synthase from Erythrobacter litoralis (strain HTCC2594).